We begin with the raw amino-acid sequence, 89 residues long: Small ribosomal subunit protein uS15 (89 aa).

The protein belongs to the universal ribosomal protein uS15 family. As to quaternary structure, part of the 30S ribosomal subunit. Forms a bridge to the 50S subunit in the 70S ribosome, contacting the 23S rRNA.

Its function is as follows. One of the primary rRNA binding proteins, it binds directly to 16S rRNA where it helps nucleate assembly of the platform of the 30S subunit by binding and bridging several RNA helices of the 16S rRNA. Forms an intersubunit bridge (bridge B4) with the 23S rRNA of the 50S subunit in the ribosome. The polypeptide is Small ribosomal subunit protein uS15 (Staphylococcus carnosus (strain TM300)).